The following is a 115-amino-acid chain: SPbeta prophage-derived uncharacterized protein YoqS (115 aa).

This chain is SPbeta prophage-derived uncharacterized protein YoqS (yoqS), found in Bacillus subtilis (strain 168).